Here is a 181-residue protein sequence, read N- to C-terminus: ATP synthase subunit b (181 aa).

The helical transmembrane segment at 12 to 32 threads the bilayer; it reads LPAVYDIVWSAVVFVVLLVVI.

Belongs to the ATPase B chain family. F-type ATPases have 2 components, F(1) - the catalytic core - and F(0) - the membrane proton channel. F(1) has five subunits: alpha(3), beta(3), gamma(1), delta(1), epsilon(1). F(0) has three main subunits: a(1), b(2) and c(10-14). The alpha and beta chains form an alternating ring which encloses part of the gamma chain. F(1) is attached to F(0) by a central stalk formed by the gamma and epsilon chains, while a peripheral stalk is formed by the delta and b chains.

The protein localises to the cell membrane. In terms of biological role, f(1)F(0) ATP synthase produces ATP from ADP in the presence of a proton or sodium gradient. F-type ATPases consist of two structural domains, F(1) containing the extramembraneous catalytic core and F(0) containing the membrane proton channel, linked together by a central stalk and a peripheral stalk. During catalysis, ATP synthesis in the catalytic domain of F(1) is coupled via a rotary mechanism of the central stalk subunits to proton translocation. Its function is as follows. Component of the F(0) channel, it forms part of the peripheral stalk, linking F(1) to F(0). The polypeptide is ATP synthase subunit b (Clavibacter sepedonicus (Clavibacter michiganensis subsp. sepedonicus)).